Reading from the N-terminus, the 200-residue chain is Ribonuclease HII (200 aa).

In terms of domain architecture, RNase H type-2 spans 6 to 200 (ESIAGVDEVG…KLFAVHGSLT (195 aa)). A divalent metal cation contacts are provided by Asp-12, Glu-13, and Asp-108.

Belongs to the RNase HII family. The cofactor is Mn(2+). It depends on Mg(2+) as a cofactor.

Its subcellular location is the cytoplasm. It carries out the reaction Endonucleolytic cleavage to 5'-phosphomonoester.. Its function is as follows. Endonuclease that specifically degrades the RNA of RNA-DNA hybrids. This chain is Ribonuclease HII, found in Prochlorococcus marinus (strain MIT 9303).